The sequence spans 923 residues: MSYPYQKSHHQTQQPQQNGHPQHQLMLQQQQQADHSPHHHHHHHVHHATAHAYPYELGRSPLRSPQSPPLYSGKPPPPPPQSYHSYQQPPTAAHPPVSLSGAPTSMPGMMPGQQPPGMTLSLGGGGGGGGGGSAGDCFMLPPLQPQSPDGLSTVTNTSSTATNAPSARSVYPQHHQPSYPSIGSSHHPFHSPASAAALIGPSMPQHAQQQQQHQMQPHHYSSMHLLGPAGGPPSSVGPASMVGMMGPGGHGGGGVGGGAGGIAGGVGGGPGGGMGGGHNYSQSDDDSGCALEEYTWVPPGLRPDQVHLYFSAIPEDKVPYVNSIGERHRVRQLLQQLPPHDNEVRYCHSLTDEERKELKLFSAQRKREALGRGTVKQITTTLICERCGECASSGDMMVFASRFEPNTCWHPACFACCVCKELLVDLIYFHRENRLYCGRHHAETLKPRCSACDEIILADECTEAEGRAWHIKHFACFECDKQLGGQRYIMRDGKPYCLHCFDAMFAEYCDYCSEPIGVDQGQMSHDGQHWHATDQCFACSTCRCSLLGRPFLPRRGEIYCSIACSKGEPPTPSDEYAHRSSQPSHTAARSPEPLRSPERGTGRLSPPHTEHEVQSHEAASTVGSDRDHQLRSPASNGTATDNGTGTAGGGVGDSNRHRIPHRQPLDLTDLGHSLEQHWQSERTGSETISITTATATVRTQVTGPIAGANGNGPTGGGPILTSSMPELNRCLAAAGSGESPSFSGTNSPTPMPIEDSVVANGGDDADEQNQNASDASHSIKEVRFEGDFQDSLPRTKSYCQRNGGQRNRAAKSSSYASDDDELAEDETDNYHHRRHHHSHQREQQRPVDDSDARSVCSTCSSSSSSADDDVYELPLRRTSYGGTRIHYMPNNSLACARKRKQLQTSSGVAGQHYEKDNKNCIIS.

The tract at residues 1–196 (MSYPYQKSHH…HPFHSPASAA (196 aa)) is disordered. Over residues 11–34 (QTQQPQQNGHPQHQLMLQQQQQAD) the composition is skewed to low complexity. A compositionally biased stretch (basic residues) spans 37-49 (PHHHHHHHVHHAT). 2 stretches are compositionally biased toward low complexity: residues 59–73 (RSPLRSPQSPPLYSG) and 106–118 (MPGMMPGQQPPGM). The span at 122–134 (LGGGGGGGGGGSA) shows a compositional bias: gly residues. 2 stretches are compositionally biased toward low complexity: residues 152-169 (STVTNTSSTATNAPSARS) and 184-196 (SSHHPFHSPASAA). Positions 275–383 (GGGHNYSQSD…TVKQITTTLI (109 aa)) constitute a PET domain. 3 LIM zinc-binding domains span residues 382–446 (LICE…ETLK), 447–507 (PRCS…MFAE), and 508–570 (YCDY…GEPP). 2 disordered regions span residues 571–668 (TPSD…LDLT) and 703–867 (GPIA…SSAD). Residues 709–718 (NGNGPTGGGP) are compositionally biased toward gly residues. Residues 738 to 748 (ESPSFSGTNSP) show a composition bias toward polar residues. Residues 777-786 (HSIKEVRFEG) are compositionally biased toward basic and acidic residues. Polar residues predominate over residues 792-805 (LPRTKSYCQRNGGQ). The span at 817–827 (SDDDELAEDET) shows a compositional bias: acidic residues. Residues 840 to 852 (QREQQRPVDDSDA) are compositionally biased toward basic and acidic residues. Residues 853–865 (RSVCSTCSSSSSS) are compositionally biased toward low complexity.

Belongs to the prickle / espinas / testin family. As to quaternary structure, interacts with dsh; PET and LIM domains interact with dsh DEP domain, in wing cells. Interacts with Vang in photoreceptor cells.

Its subcellular location is the cell membrane. Its function is as follows. Acts in a planar cell polarity (PCP) complex; polarization along the apical/basal axis of epithelial cells. PCP signaling in the wing disk requires the receptor fz and the cytoplasmic proteins dsh and pk. These act in a feedback loop leading to activation of the jnk cascade and subsequent polarized arrangement of hairs and bristles. Dgo and pk compete with one another for dsh binding, thereby modulating fz dsh activity and ensuring tight control over fz PCP signaling. Vang, stan and pk function together to regulate the establishment of tissue polarity in the adult eye. The chain is Protein prickle from Anopheles gambiae (African malaria mosquito).